The primary structure comprises 50 residues: Large ribosomal subunit protein bL32A (50 aa).

A compositionally biased stretch (basic residues) spans 1 to 19; it reads MAVPKRRKSRSNTRHRRSQ. The segment at 1-21 is disordered; the sequence is MAVPKRRKSRSNTRHRRSQWK.

This sequence belongs to the bacterial ribosomal protein bL32 family.

This Saccharopolyspora erythraea (strain ATCC 11635 / DSM 40517 / JCM 4748 / NBRC 13426 / NCIMB 8594 / NRRL 2338) protein is Large ribosomal subunit protein bL32A.